The primary structure comprises 107 residues: UPF0473 protein LACR_0139 (107 aa).

It belongs to the UPF0473 family.

In Lactococcus lactis subsp. cremoris (strain SK11), this protein is UPF0473 protein LACR_0139.